Consider the following 185-residue polypeptide: Adenylate kinase (185 aa).

Residue 8–16 (GIPGSGSTT) participates in ATP binding.

Belongs to the archaeal adenylate kinase family.

The protein resides in the cytoplasm. The enzyme catalyses AMP + ATP = 2 ADP. This chain is Adenylate kinase (adkA), found in Methanothermobacter thermautotrophicus (strain ATCC 29096 / DSM 1053 / JCM 10044 / NBRC 100330 / Delta H) (Methanobacterium thermoautotrophicum).